Consider the following 336-residue polypeptide: Major histocompatibility complex class I-related protein 1 (336 aa).

Positions 1-18 (MMLLLPLIIVLMMKLSDA) are cleaved as a signal peptide. Residues 19–105 (RTHSLRYFRL…KQLQHHYNHS (87 aa)) are alpha-1. The interval 19-197 (RTHSLRYFRL…EYGKDALQRT (179 aa)) is antigen-binding cleft. Topologically, residues 19–298 (RTHSLRYFRL…QESETILLVV (280 aa)) are extracellular. Residues Tyr-25 and Arg-27 each coordinate 8-(9H-purin-6-yl)-2-oxa-8-azabicyclo[3.3.1]nona-3,6-diene-4,6-dicarbaldehyde. 5-(2-oxoethylideneamino)-6-(D-ribitylamino)uracil is bound by residues Arg-27, Ser-42, and Lys-61. 5-(2-oxopropylideneamino)-6-(D-ribitylamino)uracil-binding residues include Arg-27, Ser-42, and Lys-61. 3 residues coordinate 7-hydroxy-6-methyl-8-(1-D-ribityl)lumazine: Arg-27, Ser-42, and Lys-61. Positions 61 and 76 each coordinate 8-(9H-purin-6-yl)-2-oxa-8-azabicyclo[3.3.1]nona-3,6-diene-4,6-dicarbaldehyde. Lys-61 contributes to the 2-amino-4-oxopteridine-6-carbaldehyde binding site. Lys-61 is a binding site for pyridoxal. The N-linked (GlcNAc...) asparagine glycan is linked to Asn-103. Positions 106-197 (GFHTYQRMIG…EYGKDALQRT (92 aa)) are alpha-2. Arg-112 contacts 8-(9H-purin-6-yl)-2-oxa-8-azabicyclo[3.3.1]nona-3,6-diene-4,6-dicarbaldehyde. Positions 112, 170, and 171 each coordinate 5-(2-oxoethylideneamino)-6-(D-ribitylamino)uracil. 5-(2-oxopropylideneamino)-6-(D-ribitylamino)uracil is bound by residues Arg-112, Tyr-170, and Gln-171. Arg-112, Tyr-170, and Gln-171 together coordinate 7-hydroxy-6-methyl-8-(1-D-ribityl)lumazine. Disulfide bonds link Cys-116-Cys-179 and Cys-218-Cys-274. The tract at residues 198-289 (EPPKVRVNHK…GVHMVLQGFQ (92 aa)) is alpha-3. An Ig-like C1-type domain is found at 200-295 (PKVRVNHKET…QGFQESETIL (96 aa)). The interval 290–298 (ESETILLVV) is connecting peptide. Residues 299 to 319 (KAVGFIVLAIALAGVGILAWR) traverse the membrane as a helical segment. The Cytoplasmic portion of the chain corresponds to 320 to 336 (KRPRGKNKVICLSTPEH).

Belongs to the MHC class I family. Heterotrimer that consists of MR1, B2M and metabolite antigen. Major classes of metabolite ligands presented by MR1 include riboflavin-related antigens, pyrimidines and ribityl lumazines, nucleobase adducts and folate derivatives. Forms reversible covalent Schiff base complexes with microbial pyrimidine-based metabolite, which serves as a molecular switch triggering complete folding, stable association with B2M and translocation of the ternary complex from endoplasmic reticulum to the plasma membrane. Alternatively, forms non-Schiff base complexes with ribityl lumazines. On antigen-presenting cells, the ternary complex interacts with TCR on MR1-restricted T cells. Interacts with TAPBP and TAPBPL chaperones in the endoplasmic reticulum. TAPBP associated or not with MHC class I peptide loading complex binds ligand-free MR1 or MR1-B2M complex, providing for stable MR1 pools ready for metabolite antigen processing. TAPBPL interacts with MR1 in a ligand-independent way; this interaction may stabilize MR1 pool and facilitate ligand loading and dissociation. Structurally, MR1-B2M heterodimer adopts a topology similar to classical MHC class I molecules, with alpha-1 and alpha-2 domains of MR1 forming the antigen-binding cleft composed of two alpha-helices resting on a floor of 7-stranded anti-parallel beta-pleated sheet. MR1-B2M heterodimer (via alpha-helices) interacts with TCR (via CDR domains). N-glycosylated.

The protein resides in the cell membrane. It localises to the endoplasmic reticulum membrane. The protein localises to the golgi apparatus membrane. Its subcellular location is the early endosome membrane. It is found in the late endosome membrane. In terms of biological role, antigen-presenting molecule specialized in displaying microbial pyrimidine-based metabolites to alpha-beta T cell receptors (TCR) on innate-type mucosal-associated invariant T (MAIT) cells. In complex with B2M preferentially presents riboflavin-derived metabolites to semi-invariant TCRs on MAIT cells, guiding immune surveillance of the microbial metabolome at mucosal epithelial barriers. Signature pyrimidine-based microbial antigens are generated via non-enzymatic condensation of metabolite intermediates of the riboflavin pathway with by-products arising from other metabolic pathways such as glycolysis. Typical potent antigenic metabolites are 5-(2-oxoethylideneamino)-6-D-ribitylaminouracil (5-OE-RU) and 5-(2-oxopropylideneamino)-6-D-ribitylaminouracil (5-OP-RU), products of condensation of 5-amino-6-D-ribityaminouracil (5-A-RU) with glyoxal or methylglyoxal by-products, respectively. May present microbial antigens to various MAIT cell subsets, providing for unique recognition of diverse microbes, including pathogens that do not synthesize riboflavin. Upon antigen recognition, elicits rapid innate-type MAIT cell activation to eliminate pathogenic microbes by directly killing infected cells. During T cell development, drives thymic selection and post-thymic terminal differentiation of MAIT cells in a process dependent on commensal microflora. Acts as an immune sensor of cancer cell metabolome. May present a tumor-specific or -associated metabolite essential for cancer cell survival to a pan-cancer TCR on a non-MAIT CD8-positive T cell clone, triggering T cell-mediated killing of a wide range of cancer cell types. May present tumor-enriched pyridoxal and pyridoxal 5'-phosphate antigens, enabling preferential recognition of cancer cells. Presents nucleobase carbonyl adducts generated during oxidative stress. Captures M3Ade, a nucleobase adduct composed of one adenine modified by a malondialdehyde trimer, for recognition by MR1-restricted T cell clones expressing a polyclonal TCR repertoire. This is Major histocompatibility complex class I-related protein 1 from Bos taurus (Bovine).